We begin with the raw amino-acid sequence, 596 residues long: 3-hydroxy-3-methylglutaryl-coenzyme A reductase 1 (596 aa).

The disordered stretch occupies residues 1–29 (MDVRRRPVKPLYTSKDASAGEPLKQQEVS). 2 helical membrane passes run 41–61 (LYLTNGLFFTMFFSVMYFLLV) and 83–103 (AMVSLIASVIYLLGFFGIGFV). A linker region spans residues 104-183 (QSFVSRSNSD…SPIIMPALSE (80 aa)). Positions 184–596 (DDEEIIQSVV…YNRSIKDISK (413 aa)) are catalytic. The active-site Charge relay system is E278. N342 carries an N-linked (GlcNAc...) asparagine glycan. K410 acts as the Charge relay system in catalysis. N455 carries N-linked (GlcNAc...) asparagine glycosylation. D486 serves as the catalytic Charge relay system. H584 acts as the Proton donor in catalysis. An N-linked (GlcNAc...) asparagine glycan is attached at N588.

Belongs to the HMG-CoA reductase family. Expressed in flower primordia and anthers.

The protein localises to the endoplasmic reticulum membrane. The enzyme catalyses (R)-mevalonate + 2 NADP(+) + CoA = (3S)-3-hydroxy-3-methylglutaryl-CoA + 2 NADPH + 2 H(+). It participates in metabolic intermediate biosynthesis; (R)-mevalonate biosynthesis; (R)-mevalonate from acetyl-CoA: step 3/3. Functionally, catalyzes the synthesis of mevalonate. The specific precursor of all isoprenoid compounds present in plants. In Solanum tuberosum (Potato), this protein is 3-hydroxy-3-methylglutaryl-coenzyme A reductase 1 (HMG1).